The following is a 146-amino-acid chain: ATP synthase epsilon chain (146 aa).

Residues 102-122 form a disordered region; that stretch reads QSAKKRAEQHMQEAKEKHNER.

It belongs to the ATPase epsilon chain family. In terms of assembly, F-type ATPases have 2 components, CF(1) - the catalytic core - and CF(0) - the membrane proton channel. CF(1) has five subunits: alpha(3), beta(3), gamma(1), delta(1), epsilon(1). CF(0) has three main subunits: a, b and c.

Its subcellular location is the cell membrane. In terms of biological role, produces ATP from ADP in the presence of a proton gradient across the membrane. The sequence is that of ATP synthase epsilon chain from Lactobacillus gasseri (strain ATCC 33323 / DSM 20243 / BCRC 14619 / CIP 102991 / JCM 1131 / KCTC 3163 / NCIMB 11718 / NCTC 13722 / AM63).